A 664-amino-acid chain; its full sequence is MVNPGHGRGPDSGTAAGGSNSDPFPANLRVLVVDDDPTCLMILERMLMTCLYRVTKCNRAESALSLLRKNKNGFDIVISDVHMPDMDGFKLLEHVGLEMDLPVIMMSADDSKSVVLKGVTHGAVDYLIKPVRIEALKNIWQHVVRKKRNEWNVSEHSGGSIEDTGGDRDRQQQHREDADNNSSSVNEGNGRSSRKRKEEEVDDQGDDKEDSSSLKKPRVVWSVELHQQFVAAVNQLGVDKAVPKKILEMMNVPGLTRENVASHLQKYRIYLRRLGGVSQHQGNMNHSFMTGQDQSFGPLSSLNGFDLQSLAVTGQLPPQSLAQLQAAGLGRPTLAKPGMSVSPLVDQRSIFNFENPKIRFGDGHGQTMNNGNLLHGVPTGSHMRLRPGQNVQSSGMMLPVADQLPRGGPSMLPSLGQQPILSSSVSRRSDLTGALAVRNSIPETNSRVLPTTHSVFNNFPADLPRSSFPLASAPGISVPVSVSYQEEVNSSDAKGGSSAATAGFGNPSYDIFNDFPQHQQHNKNISNKLNDWDLRNMGLVFSSNQDAATATATAAFSTSEAYSSSSTQRKRRETDATVVGEHGQNLQSPSRNLYHLNHVFMDGGSVRVKSERVAETVTCPPANTLFHEQYNQEDLMSAFLKQEGIPSVDNEFEFDGYSIDNIQV.

Residues 1 to 21 (MVNPGHGRGPDSGTAAGGSNS) form a disordered region. The Response regulatory domain maps to 29 to 144 (RVLVVDDDPT…ALKNIWQHVV (116 aa)). Asp80 is subject to 4-aspartylphosphate. Residues 151–215 (WNVSEHSGGS…DDKEDSSSLK (65 aa)) are disordered. The segment covering 165 to 178 (GGDRDRQQQHREDA) has biased composition (basic and acidic residues). The span at 180 to 191 (NNSSSVNEGNGR) shows a compositional bias: polar residues. Residues 200 to 209 (EVDDQGDDKE) show a composition bias toward acidic residues. The short motif at 215 to 218 (KKPR) is the Nuclear localization signal element. The segment at residues 218 to 268 (RVVWSVELHQQFVAAVNQLGVDKAVPKKILEMMNVPGLTRENVASHLQKYR) is a DNA-binding region (myb-like GARP). Residues 554–567 (AAFSTSEAYSSSST) are compositionally biased toward low complexity. The segment at 554–589 (AAFSTSEAYSSSSTQRKRRETDATVVGEHGQNLQSP) is disordered.

It belongs to the ARR family. Type-B subfamily. As to quaternary structure, binds the target DNA as a monomer. Interacts with histidine-containing phosphotransfer proteins. Post-translationally, two-component system major event consists of a His-to-Asp phosphorelay between a sensor histidine kinase (HK) and a response regulator (RR). In plants, the His-to-Asp phosphorelay involves an additional intermediate named Histidine-containing phosphotransfer protein (HPt). This multistep phosphorelay consists of a His-Asp-His-Asp sequential transfer of a phosphate group between first a His and an Asp of the HK protein, followed by the transfer to a conserved His of the HPt protein and finally the transfer to an Asp in the receiver domain of the RR protein. Phosphorylated in response to cytokinin mediated by AHK3. As to expression, detected in the whole plant. Predominantly expressed in pollen.

The protein resides in the nucleus. Its function is as follows. Transcriptional activator that binds specifically to the DNA sequence 5'-[AG]GATT-3'. Functions as a response regulator involved in His-to-Asp phosphorelay signal transduction system. Phosphorylation of the Asp residue in the receiver domain activates the ability of the protein to promote the transcription of target genes. Could directly activate some type-A response regulators in response to cytokinins. Involved in the expression of nuclear genes for components of mitochondrial complex I. Promotes cytokinin-mediated leaf longevity. Involved in the ethylene signaling pathway in an ETR1-dependent manner and in the cytokinin signaling pathway. The polypeptide is Two-component response regulator ARR2 (ARR2) (Arabidopsis thaliana (Mouse-ear cress)).